Reading from the N-terminus, the 109-residue chain is Ribonuclease P protein component (109 aa).

The protein belongs to the RnpA family. In terms of assembly, consists of a catalytic RNA component (M1 or rnpB) and a protein subunit.

The catalysed reaction is Endonucleolytic cleavage of RNA, removing 5'-extranucleotides from tRNA precursor.. In terms of biological role, RNaseP catalyzes the removal of the 5'-leader sequence from pre-tRNA to produce the mature 5'-terminus. It can also cleave other RNA substrates such as 4.5S RNA. The protein component plays an auxiliary but essential role in vivo by binding to the 5'-leader sequence and broadening the substrate specificity of the ribozyme. This chain is Ribonuclease P protein component, found in Mycoplasma capricolum subsp. capricolum (strain California kid / ATCC 27343 / NCTC 10154).